Reading from the N-terminus, the 251-residue chain is Type III pantothenate kinase (251 aa).

Residue 6 to 13 (DCGNSFIK) coordinates ATP. Residues Y93 and 100–103 (GLDR) contribute to the substrate site. Residue D102 is the Proton acceptor of the active site. D122 is a K(+) binding site. T125 is a binding site for ATP. T182 is a binding site for substrate.

Belongs to the type III pantothenate kinase family. As to quaternary structure, homodimer. The cofactor is NH4(+). K(+) serves as cofactor.

Its subcellular location is the cytoplasm. The catalysed reaction is (R)-pantothenate + ATP = (R)-4'-phosphopantothenate + ADP + H(+). Its pathway is cofactor biosynthesis; coenzyme A biosynthesis; CoA from (R)-pantothenate: step 1/5. Catalyzes the phosphorylation of pantothenate (Pan), the first step in CoA biosynthesis. In Azotobacter vinelandii (strain DJ / ATCC BAA-1303), this protein is Type III pantothenate kinase.